Here is a 115-residue protein sequence, read N- to C-terminus: Large ribosomal subunit protein uL22 (115 aa).

It belongs to the universal ribosomal protein uL22 family. In terms of assembly, part of the 50S ribosomal subunit.

In terms of biological role, this protein binds specifically to 23S rRNA; its binding is stimulated by other ribosomal proteins, e.g. L4, L17, and L20. It is important during the early stages of 50S assembly. It makes multiple contacts with different domains of the 23S rRNA in the assembled 50S subunit and ribosome. Its function is as follows. The globular domain of the protein is located near the polypeptide exit tunnel on the outside of the subunit, while an extended beta-hairpin is found that lines the wall of the exit tunnel in the center of the 70S ribosome. This chain is Large ribosomal subunit protein uL22, found in Limosilactobacillus fermentum (strain NBRC 3956 / LMG 18251) (Lactobacillus fermentum).